The primary structure comprises 161 residues: S-ribosylhomocysteine lyase (161 aa).

Residues H57, H61, and C127 each contribute to the Fe cation site.

Belongs to the LuxS family. As to quaternary structure, homodimer. It depends on Fe cation as a cofactor.

The catalysed reaction is S-(5-deoxy-D-ribos-5-yl)-L-homocysteine = (S)-4,5-dihydroxypentane-2,3-dione + L-homocysteine. Involved in the synthesis of autoinducer 2 (AI-2) which is secreted by bacteria and is used to communicate both the cell density and the metabolic potential of the environment. The regulation of gene expression in response to changes in cell density is called quorum sensing. Catalyzes the transformation of S-ribosylhomocysteine (RHC) to homocysteine (HC) and 4,5-dihydroxy-2,3-pentadione (DPD). This is S-ribosylhomocysteine lyase from Streptococcus equi subsp. equi (strain 4047).